Reading from the N-terminus, the 246-residue chain is 14-3-3 protein beta/alpha (246 aa).

Position 1 is an N-acetylmethionine (Met1). The residue at position 2 (Thr2) is an N-acetylthreonine; in 14-3-3 protein beta/alpha, N-terminally processed. Phosphothreonine is present on Thr2. Lys5 bears the N6-acetyllysine mark. At Lys51 the chain carries N6-acetyllysine; alternate. Lys51 participates in a covalent cross-link: Glycyl lysine isopeptide (Lys-Gly) (interchain with G-Cter in SUMO2); alternate. Ser60 is modified (phosphoserine). An N6-acetyllysine modification is found at Lys70. Residues Tyr84 and Tyr106 each carry the 3'-nitrotyrosine modification. Residue Lys117 is modified to N6-acetyllysine. Ser186 and Ser232 each carry phosphoserine.

It belongs to the 14-3-3 family. Homodimer. Interacts with SAMSN1 and PRKCE. Interacts with AKAP13. Interacts with SSH1 and TORC2/CRTC2. Interacts with ABL1; the interaction results in cytoplasmic location of ABL1 and inhibition of cABL-mediated apoptosis. Interacts with ROR2 (dimer); the interaction results in phosphorylation of YWHAB on tyrosine residues. Interacts with GAB2. Interacts with YAP1 (phosphorylated form). Interacts with the phosphorylated (by AKT1) form of SRPK2. Interacts with PKA-phosphorylated AANAT. Interacts with MYO1C. Interacts with SIRT2. Interacts with the 'Thr-369' phosphorylated form of DAPK2. Interacts with PI4KB, TBC1D22A and TBC1D22B. Interacts with the 'Ser-1134' and 'Ser-1161' phosphorylated form of SOS1. Interacts (via phosphorylated form) with YWHAB; this interaction occurs in a protein kinase AKT1-dependent manner. Interacts with SLITRK1. Interacts with SYNPO2 (phosphorylated form); YWHAB competes with ACTN2 for interaction with SYNPO2. Interacts with RIPOR2 (via phosphorylated form); this interaction occurs in a chemokine-dependent manner and does not compete for binding of RIPOR2 with RHOA nor blocks inhibition of RIPOR2-mediated RHOA activity. Interacts with MARK2 and MARK3. Interacts with TESK1; the interaction is dependent on the phosphorylation of TESK1 'Ser-439' and inhibits TESK1 kinase activity. Interacts with MEFV. Interacts with HDAC4. Interacts with ADAM22 (via C-terminus). The alpha, brain-specific form differs from the beta form in being phosphorylated. Phosphorylated on Ser-60 by protein kinase C delta type catalytic subunit in a sphingosine-dependent fashion.

It localises to the cytoplasm. The protein resides in the melanosome. Its function is as follows. Adapter protein implicated in the regulation of a large spectrum of both general and specialized signaling pathways. Binds to a large number of partners, usually by recognition of a phosphoserine or phosphothreonine motif. Binding generally results in the modulation of the activity of the binding partner. Negative regulator of osteogenesis. Blocks the nuclear translocation of the phosphorylated form (by AKT1) of SRPK2 and antagonizes its stimulatory effect on cyclin D1 expression resulting in blockage of neuronal apoptosis elicited by SRPK2. Negative regulator of signaling cascades that mediate activation of MAP kinases via AKAP13. The protein is 14-3-3 protein beta/alpha (YWHAB) of Bos taurus (Bovine).